The following is a 125-amino-acid chain: Small ribosomal subunit protein uS12 (125 aa).

D89 is subject to 3-methylthioaspartic acid.

Belongs to the universal ribosomal protein uS12 family. In terms of assembly, part of the 30S ribosomal subunit. Contacts proteins S8 and S17. May interact with IF1 in the 30S initiation complex.

With S4 and S5 plays an important role in translational accuracy. Functionally, interacts with and stabilizes bases of the 16S rRNA that are involved in tRNA selection in the A site and with the mRNA backbone. Located at the interface of the 30S and 50S subunits, it traverses the body of the 30S subunit contacting proteins on the other side and probably holding the rRNA structure together. The combined cluster of proteins S8, S12 and S17 appears to hold together the shoulder and platform of the 30S subunit. In Clostridium kluyveri (strain ATCC 8527 / DSM 555 / NBRC 12016 / NCIMB 10680 / K1), this protein is Small ribosomal subunit protein uS12.